The sequence spans 173 residues: Alpha-crystallin A chain (173 aa).

Met1 bears the N-acetylmethionine mark. The required for complex formation with BFSP1 and BFSP2 stretch occupies residues 1 to 63 (MDIAIQHPWF…RTVLDSGISE (63 aa)). Gln6 is subject to Deamidated glutamine; partial. Ser45 bears the Phosphoserine mark. The residue at position 50 (Gln50) is a Deamidated glutamine; partial. Positions 52–162 (LFRTVLDSGI…GHSERAIPVS (111 aa)) constitute a sHSP domain. The residue at position 70 (Lys70) is an N6-acetyllysine. Gln90 carries the deamidated glutamine; partial modification. Lys99 carries the post-translational modification N6-acetyllysine. His100 serves as a coordination point for Zn(2+). A Deamidated asparagine; partial modification is found at Asn101. Glu102 and His107 together coordinate Zn(2+). Position 122 is a phosphoserine (Ser122). At Asn123 the chain carries Deamidated asparagine; partial. The disordered stretch occupies residues 144 to 173 (PKIPSGMDAGHSERAIPVSREEKPGSAPSS). The segment covering 153–167 (GHSERAIPVSREEKP) has biased composition (basic and acidic residues). His154 is a binding site for Zn(2+). The O-linked (GlcNAc) serine glycan is linked to Ser162.

The protein belongs to the small heat shock protein (HSP20) family. Heteromer composed of three CRYAA and one CRYAB subunits. Inter-subunit bridging via zinc ions enhances stability, which is crucial as there is no protein turn over in the lens. Can also form homodimers and homotetramers (dimers of dimers) which serve as the building blocks of homooligomers. Within homooligomers, the zinc-binding motif is created from residues of 3 different molecules. His-100 and Glu-102 from one molecule are ligands of the zinc ion, and His-107 and His-154 residues from additional molecules complete the site with tetrahedral coordination geometry. Part of a complex required for lens intermediate filament formation composed of BFSP1, BFSP2 and CRYAA. Post-translationally, acetylation at Lys-70 may increase chaperone activity. In terms of processing, undergoes age-dependent proteolytical cleavage at the C-terminus.

It is found in the cytoplasm. The protein localises to the nucleus. Its function is as follows. Contributes to the transparency and refractive index of the lens. Acts as a chaperone, preventing aggregation of various proteins under a wide range of stress conditions. Required for the correct formation of lens intermediate filaments as part of a complex composed of BFSP1, BFSP2 and CRYAA. In Equus caballus (Horse), this protein is Alpha-crystallin A chain (CRYAA).